The primary structure comprises 248 residues: Aquaporin Z (248 aa).

The next 2 helical transmembrane spans lie at 11–31 (FIGT…AAAF) and 36–56 (IGFA…AFAI). The short motif at 65–67 (NPA) is the NPA 1 element. 3 helical membrane-spanning segments follow: residues 87–107 (IAAQ…IAGG), 132–152 (LLAC…IILG), and 161–181 (GFAP…SIPV). The NPA 2 signature appears at 187–189 (NPA). Residues 203 to 223 (IAELWLFWLAPIVGAALAGLF) traverse the membrane as a helical segment.

It belongs to the MIP/aquaporin (TC 1.A.8) family. Homotetramer.

The protein localises to the cell inner membrane. It carries out the reaction H2O(in) = H2O(out). Functionally, channel that permits osmotically driven movement of water in both directions. It is involved in the osmoregulation and in the maintenance of cell turgor during volume expansion in rapidly growing cells. It mediates rapid entry or exit of water in response to abrupt changes in osmolarity. The protein is Aquaporin Z of Gloeobacter violaceus (strain ATCC 29082 / PCC 7421).